We begin with the raw amino-acid sequence, 415 residues long: MKGSYKSRWVIVIVVVIAAIAAFWFWQGRNDSQSAAPGATKQAQQSPAGGRRGMRADPLAPVQAATAVEQAVPRYLTGLGTITAANTVTVRSRVDGQLMALHFQEGQQVKAGDLLAEIDPSQFKVALAQAQGQLAKDKATLANARRDLARYQQLAKTNLVSRQELDAQQALVSETEGTIKADEASVASAQLQLDWSRITAPVDGRVGLKQVDVGNQISSGDTTGIVVITQTHPIDLVFTLPESDIATVVQAQKAGKPLVVEAWDRTNSKKLSEGTLLSLDNQIDATTGTIKVKARFNNQDDALFPNQFVNARMLVDTEQNAVVIPTAALQMGNEGHFVWVLNSENKVSKHLVTPGIQDSQKVVIRAGISAGDRVVTDGIDRLTEGAKVEVVETQSATTPEEKATSREYAKKGARS.

The N-terminal stretch at 1–21 is a signal peptide; the sequence is MKGSYKSRWVIVIVVVIAAIA. Over residues 31 to 47 the composition is skewed to polar residues; sequence DSQSAAPGATKQAQQSP. Disordered regions lie at residues 31 to 56 and 390 to 415; these read DSQS…GMRA and VVET…GARS. The segment covering 399–415 has biased composition (basic and acidic residues); sequence PEEKATSREYAKKGARS.

It belongs to the membrane fusion protein (MFP) (TC 8.A.1) family. Part of a tripartite efflux system composed of MdtA, MdtB and MdtC.

The protein localises to the cell inner membrane. Functionally, the MdtABC tripartite complex confers resistance against novobiocin and deoxycholate. The polypeptide is Multidrug resistance protein MdtA (Escherichia coli O6:H1 (strain CFT073 / ATCC 700928 / UPEC)).